Consider the following 2671-residue polypeptide: Stalled ribosome sensor GCN1 (2671 aa).

Residue A2 is modified to N-acetylalanine. HEAT repeat units lie at residues N140–G178, E257–S293, Q294–D331, I385–K423, L425–L459, L460–D503, N560–G597, K599–A636, D697–V732, and L733–A770. Residue S729 is modified to Phosphoserine. Position 786 is a phosphoserine (S786). Residues Q804–D863 are a coiled coil. HEAT repeat units follow at residues V879 to L925, S979 to L1016, L1035 to G1072, F1078 to A1115, D1155 to R1192, Y1210 to S1250, S1251 to K1289, E1290 to K1332, P1335 to E1372, A1374 to I1410, L1413 to K1451, P1455 to A1492, H1493 to K1530, S1534 to N1571, E1573 to D1609, P1611 to Q1648, P1653 to E1690, C1692 to V1729, K1731 to D1769, P1773 to E1810, A1812 to G1848, E1921 to E1958, K1959 to R1996, Y2001 to H2038, Q2039 to V2076, P2078 to T2106, R2107 to D2146, T2147 to A2184, S2188 to A2225, K2259 to A2296, P2301 to G2338, I2339 to K2380, D2382 to A2417, V2422 to E2459, Q2546 to P2583, and Q2588 to G2625. Residues G2260–L2408 are RWDBD region. S2276 bears the Phosphoserine mark. An HEAT 47; degenerate repeat occupies E2627–S2661.

Belongs to the GCN1 family. As to quaternary structure, interacts with EIF2AK4/GCN2; this interaction stimulates the EIF2AK4/GCN2 kinase activity and is impaired by IMPACT upon a variety of stress conditions, such as amino acid depletion, UV-C irradiation, proteasome inhibitor treatment and glucose deprivation. Interacts with IMPACT; this prevents the interaction of GCN1 with EIF2AK4/GCN2 and inhibits EIF2AK4/GCN2 kinase activity. Interacts with RNF14; interaction takes place following ribosome stalling and promotes recruitment of RNF14. In terms of tissue distribution, ubiquitously expressed. Expressed in skeletal muscules, ovary and testis.

The protein resides in the cytoplasm. Functionally, ribosome collision sensor that plays a key role in the RNF14-RNF25 translation quality control pathway, a pathway that takes place when a ribosome has stalled during translation, and which promotes ubiquitination and degradation of translation factors on stalled ribosomes. Directly binds to the ribosome and acts as a sentinel for colliding ribosomes: activated following ribosome stalling and promotes recruitment of RNF14, which directly ubiquitinates EEF1A1/eEF1A, leading to its degradation. In addition to EEF1A1/eEF1A, the RNF14-RNF25 translation quality control pathway mediates degradation of ETF1/eRF1 and ubiquitination of ribosomal protein. GCN1 also acts as a positive activator of the integrated stress response (ISR) by mediating activation of EIF2AK4/GCN2 in response to amino acid starvation. Interaction with EIF2AK4/GCN2 on translating ribosomes stimulates EIF2AK4/GCN2 kinase activity, leading to phosphorylation of eukaryotic translation initiation factor 2 (eIF-2-alpha/EIF2S1). EIF2S1/eIF-2-alpha phosphorylation converts EIF2S1/eIF-2-alpha into a global protein synthesis inhibitor, leading to a global attenuation of cap-dependent translation, and thus to a reduced overall utilization of amino acids, while concomitantly initiating the preferential translation of ISR-specific mRNAs, such as the transcriptional activator ATF4, and hence allowing ATF4-mediated reprogramming of amino acid biosynthetic gene expression to alleviate nutrient depletion. This is Stalled ribosome sensor GCN1 from Homo sapiens (Human).